We begin with the raw amino-acid sequence, 66 residues long: MKTSALFVIFGLVLLFCNSFAAELKTTGRGCGGLMAGCGGKSTFCCSGYNCSPTWKWCVYARPGRR.

The signal sequence occupies residues 1-21; the sequence is MKTSALFVIFGLVLLFCNSFA. The propeptide occupies 22–29; that stretch reads AELKTTGR. Disulfide bonds link Cys-31-Cys-46, Cys-38-Cys-51, and Cys-45-Cys-58.

This sequence belongs to the neurotoxin 10 (Hwtx-1) family. 46 (Jztx-7/10/12) subfamily. In terms of tissue distribution, expressed by the venom gland.

It is found in the secreted. Probable ion channel inhibitor. This Chilobrachys guangxiensis (Chinese earth tiger tarantula) protein is U1-theraphotoxin-Cg1b.